A 159-amino-acid chain; its full sequence is 2-C-methyl-D-erythritol 2,4-cyclodiphosphate synthase (159 aa).

Positions 10 and 12 each coordinate a divalent metal cation. Residues 10-12 (DVH) and 36-37 (HS) contribute to the 4-CDP-2-C-methyl-D-erythritol 2-phosphate site. Histidine 44 is an a divalent metal cation binding site. Residues 58-60 (DIG), 63-67 (FSDTD), and arginine 144 contribute to the 4-CDP-2-C-methyl-D-erythritol 2-phosphate site.

Belongs to the IspF family. As to quaternary structure, homotrimer. It depends on a divalent metal cation as a cofactor.

The catalysed reaction is 4-CDP-2-C-methyl-D-erythritol 2-phosphate = 2-C-methyl-D-erythritol 2,4-cyclic diphosphate + CMP. It functions in the pathway isoprenoid biosynthesis; isopentenyl diphosphate biosynthesis via DXP pathway; isopentenyl diphosphate from 1-deoxy-D-xylulose 5-phosphate: step 4/6. Functionally, involved in the biosynthesis of isopentenyl diphosphate (IPP) and dimethylallyl diphosphate (DMAPP), two major building blocks of isoprenoid compounds. Catalyzes the conversion of 4-diphosphocytidyl-2-C-methyl-D-erythritol 2-phosphate (CDP-ME2P) to 2-C-methyl-D-erythritol 2,4-cyclodiphosphate (ME-CPP) with a corresponding release of cytidine 5-monophosphate (CMP). The protein is 2-C-methyl-D-erythritol 2,4-cyclodiphosphate synthase of Paraburkholderia xenovorans (strain LB400).